The following is a 497-amino-acid chain: Serine/threonine-protein kinase cst-1 (497 aa).

Residues 1 to 27 (MPPSTDSSRRNSEEGSSDGFKLDSSAL) are disordered. The 252-residue stretch at 35–286 (FDIVGKLGEG…ALRLCEHTFI (252 aa)) folds into the Protein kinase domain. ATP-binding positions include 41-49 (LGEGSYGSV) and Lys64. Asp154 acts as the Proton acceptor in catalysis. Residues 367-416 (KSAYIPGSSKNGNSPRVQPPGHTASASDPSKNQPFAQDGTGPNFQLGTSE) are disordered. The segment covering 390-416 (ASASDPSKNQPFAQDGTGPNFQLGTSE) has biased composition (polar residues). The SARAH domain occupies 446 to 493 (FEFLRNITLDELIRRKESLDSEMEEEIRELQRRYKTKRQPILDVIEIK). The stretch at 450 to 486 (RNITLDELIRRKESLDSEMEEEIRELQRRYKTKRQPI) forms a coiled coil.

It belongs to the protein kinase superfamily. STE Ser/Thr protein kinase family. STE20 subfamily. As to quaternary structure, interacts with rsf-1 (via SARAH domain); the interaction is required for the phosphorylation of cst-1. Mg(2+) serves as cofactor. Proteolytically cleaved by caspase-3 during apoptosis which results in kinase activation. Post-translationally, phosphorylated. Widely expressed in epidermal cells.

The catalysed reaction is L-seryl-[protein] + ATP = O-phospho-L-seryl-[protein] + ADP + H(+). It catalyses the reaction L-threonyl-[protein] + ATP = O-phospho-L-threonyl-[protein] + ADP + H(+). Its function is as follows. Serine/threonine-protein kinase which extends lifespan and delays tissue aging, probably by activating daf-16. The chain is Serine/threonine-protein kinase cst-1 from Caenorhabditis elegans.